A 250-amino-acid polypeptide reads, in one-letter code: Endonuclease NucS 2 (250 aa).

Belongs to the NucS endonuclease family.

It is found in the cytoplasm. In terms of biological role, cleaves both 3' and 5' ssDNA extremities of branched DNA structures. This is Endonuclease NucS 2 from Halobacterium salinarum (strain ATCC 700922 / JCM 11081 / NRC-1) (Halobacterium halobium).